A 315-amino-acid polypeptide reads, in one-letter code: Protein MFI (315 aa).

In terms of assembly, can homodimerize. Interacts with MFF; the interaction inhibits MFF interaction with DNM1L. In terms of tissue distribution, enriched in the pancreatic beta cell and the testis and is expressed at low levels in other tissues tested.

It localises to the cytoplasm. Its subcellular location is the cytosol. The protein resides in the mitochondrion outer membrane. Acts as an inhibitor of mitochondrial fission. Interacts with MFF and prevents DNM1L recruitment to mitochondria, promoting a more fused mitochondrial network. The protein is Protein MFI of Mus musculus (Mouse).